We begin with the raw amino-acid sequence, 74 residues long: MKKERTESLVAQALKNIGNDRYMLDNLVFARVKQLNAGAKTLVNMDPKRHKLVDIAIREIAEGKIDIDRIDERN.

The protein belongs to the RNA polymerase subunit omega family. The RNAP catalytic core consists of 2 alpha, 1 beta, 1 beta' and 1 omega subunit. When a sigma factor is associated with the core the holoenzyme is formed, which can initiate transcription.

The catalysed reaction is RNA(n) + a ribonucleoside 5'-triphosphate = RNA(n+1) + diphosphate. In terms of biological role, promotes RNA polymerase assembly. Latches the N- and C-terminal regions of the beta' subunit thereby facilitating its interaction with the beta and alpha subunits. This chain is DNA-directed RNA polymerase subunit omega, found in Helicobacter acinonychis (strain Sheeba).